Consider the following 713-residue polypeptide: Constitutive lysine decarboxylase (713 aa).

Residue K367 is modified to N6-(pyridoxal phosphate)lysine.

The protein belongs to the Orn/Lys/Arg decarboxylase class-I family. Homodecamer; built of five dimers associated in a 5-fold symmetrical double-ring. The cofactor is pyridoxal 5'-phosphate.

It catalyses the reaction L-lysine + H(+) = cadaverine + CO2. Plays a role in lysine utilization by acting as a lysine decarboxylase. This is Constitutive lysine decarboxylase (ldcC) from Escherichia coli (strain K12).